Consider the following 633-residue polypeptide: Phosphomethylpyrimidine synthase (633 aa).

Polar residues predominate over residues 1–13; it reads MNIRSNPDTTLPA. The interval 1 to 22 is disordered; that stretch reads MNIRSNPDTTLPAVTTGPLPSS. Substrate contacts are provided by residues Asn-221, Met-250, Tyr-279, His-315, 335-337, 376-379, and Glu-415; these read SRG and DGLR. Residue His-419 coordinates Zn(2+). Tyr-442 lines the substrate pocket. Zn(2+) is bound at residue His-483. [4Fe-4S] cluster contacts are provided by Cys-563, Cys-566, and Cys-571.

The protein belongs to the ThiC family. Homodimer. It depends on [4Fe-4S] cluster as a cofactor.

The enzyme catalyses 5-amino-1-(5-phospho-beta-D-ribosyl)imidazole + S-adenosyl-L-methionine = 4-amino-2-methyl-5-(phosphooxymethyl)pyrimidine + CO + 5'-deoxyadenosine + formate + L-methionine + 3 H(+). Its pathway is cofactor biosynthesis; thiamine diphosphate biosynthesis. Functionally, catalyzes the synthesis of the hydroxymethylpyrimidine phosphate (HMP-P) moiety of thiamine from aminoimidazole ribotide (AIR) in a radical S-adenosyl-L-methionine (SAM)-dependent reaction. The sequence is that of Phosphomethylpyrimidine synthase from Bradyrhizobium sp. (strain BTAi1 / ATCC BAA-1182).